The sequence spans 951 residues: MEPQLTPGAVQAIAEHPDGTGTIQPVLQVVDVRPVTTKNAPPTPKPAERFRMMLSDGVNTQQSMLATALNPLVKDATLRPGTVVQLTDFMCNTIQGKRIIIVVKLDVLQNDCIVIGNPKHYEPKSLTKEQDPNLQASVAQTNNGTYSGGASMLGPSVAPRAEQAASNSSYGGPYNSAQGMLGSSIGRTVEPGPANVSAVGSYGAISAQNTTNANMMQPTSQLNIMNANTMQPTSQLNTMNANTMQPTSQLSSLNPNQNQRFAAPASGGVFGPPGNAYGQPSRPSYQQPPPVYMNRGPASRNDSATRIIPITALNPYQPKWTIKARVTAKSDIRHWSNARSSGTVFSFDLLDAQGGEIRAQCWKESADKFFGQIEVGRVYLISRGSLKPAQKKYNTLNHDYEITLDIGLSTVEVCSDDDNSIPRLQYNFRQISELENMANETIVDLLGVVTSVSPSATIMRKIGTETRKRSIQLKDLSGRSIEVTLWGNFCDAEGQQLQLQCDSGSNPIIAFKGARVGDFNGKSVSTIGSTQLIINPDFPEVERLRQWYMTEGKTAPCISLSREMLNMGRTDARKTIAQIKDENLGRLEKPDWITVKAAISHVTTESFCYPACPKLLPVGRQCNKKAINNGDGMWHCDRCDESFQNPEYRYMLRFQIQDHTGSTYASAFDEAGEQIFGRKAGELFSIRNVDQDDAQFAEIIEGVRWHLYLFKLKVKEETYNDEQSLKCTAVKVEKLDPSKESNVLLGAIDNLLLDPKGQSDLAPNAGFTDPVGGHGAPTSSNAYAMNTGGVNQFGQQASISAGMSTPLAATRNLQTCSICGANGHSAQICHVGADMDMQETSAGGSSMGNYNSIAGNGSSECYKCKQPGHYARDCPGQSTGGLECFKCKQPGHFSRDCPVQSTGGSECFKCKQPGHFARDCPGQSTGAQHQTYGNNVAASRGYNRQSFVGGY.

The interval 139–172 (AQTNNGTYSGGASMLGPSVAPRAEQAASNSSYGG) is disordered. Residues 320-403 (WTIKARVTAK…NTLNHDYEIT (84 aa)) constitute a DNA-binding region (OB). The C4-type zinc finger occupies 612 to 639 (CPKLLPVGRQCNKKAINNGDGMWHCDRC).

Belongs to the replication factor A protein 1 family. In terms of assembly, heterotrimer of RPA1, RPA2 and RPA3 (canonical replication protein A complex). Interacts with RPA2C.

Its subcellular location is the nucleus. Its function is as follows. Component of the replication protein A complex (RPA) required for DNA recombination, repair and replication. The activity of RPA is mediated by single-stranded DNA binding and protein interactions. Probably involved in repair of double-strand DNA breaks (DSBs) induced by genotoxic stresses. The sequence is that of Replication protein A 70 kDa DNA-binding subunit C (RPA1C) from Oryza sativa subsp. japonica (Rice).